The chain runs to 505 residues: Beta-glucosidase 3 (505 aa).

A signal peptide spans 1-22 (MAAAAAFFCALLFISVQHGVLG). A beta-D-glucoside is bound by residues Gln-43 and His-143. Glu-189 functions as the Proton donor in the catalytic mechanism. A disulfide bond links Cys-208 and Cys-217. A glycan (N-linked (GlcNAc...) asparagine) is linked at Asn-221. Positions 333 and 405 each coordinate a beta-D-glucoside. Catalysis depends on Glu-405, which acts as the Nucleophile. Residues Asn-415 and Asn-436 are each glycosylated (N-linked (GlcNAc...) asparagine). Residues Trp-450 and Tyr-466 each contribute to the a beta-D-glucoside site.

Belongs to the glycosyl hydrolase 1 family.

The catalysed reaction is Hydrolysis of terminal, non-reducing beta-D-glucosyl residues with release of beta-D-glucose.. This is Beta-glucosidase 3 (BGLU3) from Oryza sativa subsp. japonica (Rice).